The primary structure comprises 224 residues: Urease accessory protein UreF (224 aa).

Belongs to the UreF family. UreD, UreF and UreG form a complex that acts as a GTP-hydrolysis-dependent molecular chaperone, activating the urease apoprotein by helping to assemble the nickel containing metallocenter of UreC. The UreE protein probably delivers the nickel.

The protein localises to the cytoplasm. In terms of biological role, required for maturation of urease via the functional incorporation of the urease nickel metallocenter. In Pseudomonas fluorescens (strain ATCC BAA-477 / NRRL B-23932 / Pf-5), this protein is Urease accessory protein UreF.